Reading from the N-terminus, the 187-residue chain is Large ribosomal subunit protein eL18x (187 aa).

The segment at 150–187 is disordered; sequence HFGPAPGVPHSNTKPYVRHKGRKFEKARGKRKSRGFKV. Residues 165 to 187 are compositionally biased toward basic residues; it reads YVRHKGRKFEKARGKRKSRGFKV.

This sequence belongs to the eukaryotic ribosomal protein eL18 family.

This is Large ribosomal subunit protein eL18x (RPL18C) from Arabidopsis thaliana (Mouse-ear cress).